A 501-amino-acid chain; its full sequence is Solute carrier family 2, facilitated glucose transporter member 5 (501 aa).

The residue at position 1 (M1) is an N-acetylmethionine. Topologically, residues M1–A18 are cytoplasmic. A helical transmembrane segment spans residues L19–V39. Y32 provides a ligand contact to D-fructose. Topologically, residues N40–T68 are extracellular. A glycan (N-linked (GlcNAc...) asparagine) is linked at N51. The chain crosses the membrane as a helical span at residues L69–P91. Over L92–R98 the chain is Cytoplasmic. The chain crosses the membrane as a helical span at residues K99–S119. Residues R120 to E126 lie on the Extracellular side of the membrane. A helical transmembrane segment spans residues L127–Y149. The Cytoplasmic portion of the chain corresponds to L150 to A161. A helical transmembrane segment spans residues L162–L182. A D-fructose-binding site is contributed by Q167. Residues R183–W192 lie on the Extracellular side of the membrane. The helical transmembrane segment at P193–F213 threads the bilayer. At P214–Q277 the chain is on the cytoplasmic side. A helical membrane pass occupies residues L278–Y298. Residues Q288 and I296 to Y298 each bind D-fructose. At Y299–H313 the chain is on the extracellular side. Residues V314–F334 form a helical membrane-spanning segment. The Cytoplasmic portion of the chain corresponds to V335 to R342. Residues L343–L363 form a helical membrane-spanning segment. Topologically, residues A364–W371 are extracellular. A helical transmembrane segment spans residues M372 to I394. H387 is a D-fructose binding site. Topologically, residues P395–F412 are cytoplasmic. Residues M413 to I433 form a helical membrane-spanning segment. H419–W420 contacts D-fructose. At Q434 to P439 the chain is on the extracellular side. Residues Y440 to V460 form a helical membrane-spanning segment. Topologically, residues P461–Q501 are cytoplasmic.

It belongs to the major facilitator superfamily. Sugar transporter (TC 2.A.1.1) family. Glucose transporter subfamily.

The protein localises to the apical cell membrane. It is found in the cell membrane. Its subcellular location is the sarcolemma. The enzyme catalyses D-fructose(out) = D-fructose(in). In terms of biological role, functions as a fructose transporter that has only low activity with other monosaccharides. Can mediate the uptake of deoxyglucose, but with low efficiency. Essential for fructose uptake in the small intestine. Plays a role in the regulation of salt uptake and blood pressure in response to dietary fructose. Required for the development of high blood pressure in response to high dietary fructose intake. In Pongo abelii (Sumatran orangutan), this protein is Solute carrier family 2, facilitated glucose transporter member 5.